Here is a 343-residue protein sequence, read N- to C-terminus: Probable 4-hydroxy-tetrahydrodipicolinate reductase 1, chloroplastic (343 aa).

A chloroplast-targeting transit peptide spans 1–14 (MLASTFATHPAAAA). Residues 167-169 (GTT) and 190-193 (SPQM) each bind NAD(+). The active-site Proton donor/acceptor is the H226. K230 acts as the Proton donor in catalysis. 235–236 (GT) contributes to the (S)-2,3,4,5-tetrahydrodipicolinate binding site.

Belongs to the DapB family.

Its subcellular location is the plastid. It localises to the chloroplast. It catalyses the reaction (S)-2,3,4,5-tetrahydrodipicolinate + NAD(+) + H2O = (2S,4S)-4-hydroxy-2,3,4,5-tetrahydrodipicolinate + NADH + H(+). The enzyme catalyses (S)-2,3,4,5-tetrahydrodipicolinate + NADP(+) + H2O = (2S,4S)-4-hydroxy-2,3,4,5-tetrahydrodipicolinate + NADPH + H(+). It functions in the pathway amino-acid biosynthesis; L-lysine biosynthesis via DAP pathway; (S)-tetrahydrodipicolinate from L-aspartate: step 4/4. Functionally, catalyzes the conversion of 4-hydroxy-tetrahydrodipicolinate (HTPA) to tetrahydrodipicolinate. The chain is Probable 4-hydroxy-tetrahydrodipicolinate reductase 1, chloroplastic (DAPB1) from Oryza sativa subsp. japonica (Rice).